A 402-amino-acid chain; its full sequence is Putative F-box protein At3g20030 (402 aa).

The region spanning Met1–Ile56 is the F-box domain.

The sequence is that of Putative F-box protein At3g20030 from Arabidopsis thaliana (Mouse-ear cress).